The sequence spans 568 residues: 2-succinyl-5-enolpyruvyl-6-hydroxy-3-cyclohexene-1-carboxylate synthase (568 aa).

Belongs to the TPP enzyme family. MenD subfamily. As to quaternary structure, homodimer. Mg(2+) serves as cofactor. It depends on Mn(2+) as a cofactor. Thiamine diphosphate is required as a cofactor.

It carries out the reaction isochorismate + 2-oxoglutarate + H(+) = 5-enolpyruvoyl-6-hydroxy-2-succinyl-cyclohex-3-ene-1-carboxylate + CO2. It participates in quinol/quinone metabolism; 1,4-dihydroxy-2-naphthoate biosynthesis; 1,4-dihydroxy-2-naphthoate from chorismate: step 2/7. It functions in the pathway quinol/quinone metabolism; menaquinone biosynthesis. Functionally, catalyzes the thiamine diphosphate-dependent decarboxylation of 2-oxoglutarate and the subsequent addition of the resulting succinic semialdehyde-thiamine pyrophosphate anion to isochorismate to yield 2-succinyl-5-enolpyruvyl-6-hydroxy-3-cyclohexene-1-carboxylate (SEPHCHC). The protein is 2-succinyl-5-enolpyruvyl-6-hydroxy-3-cyclohexene-1-carboxylate synthase of Histophilus somni (strain 2336) (Haemophilus somnus).